The following is a 309-amino-acid chain: Carbamate kinase (309 aa).

The protein belongs to the carbamate kinase family.

It is found in the cytoplasm. It carries out the reaction hydrogencarbonate + NH4(+) + ATP = carbamoyl phosphate + ADP + H2O + H(+). It functions in the pathway metabolic intermediate metabolism; carbamoyl phosphate degradation; CO(2) and NH(3) from carbamoyl phosphate: step 1/1. This Staphylococcus haemolyticus (strain JCSC1435) protein is Carbamate kinase (arcC).